The chain runs to 555 residues: Xylulose kinase (555 aa).

Substrate-binding residues include H88, R158, D274, and N275. Residues W357, 455-456, and N459 each bind ATP; that span reads GA.

Belongs to the FGGY kinase family.

The protein localises to the cytoplasm. The catalysed reaction is D-xylulose + ATP = D-xylulose 5-phosphate + ADP + H(+). This chain is Xylulose kinase, found in Schizosaccharomyces pombe (strain 972 / ATCC 24843) (Fission yeast).